The sequence spans 284 residues: Tropomyosin, smooth muscle/fibroblast CTM1 (284 aa).

A coiled-coil region spans residues 1–284; the sequence is MEAIKKKMTM…DVTLQGIGDL (284 aa). Positions 18–38 are disordered; that stretch reads AIDRAEQAETDKKSAEDKATG.

It belongs to the tropomyosin family. In terms of assembly, homodimer. As to expression, predominantly expressed in body wall muscle and heart, low in intestine, ovary and larval tail muscle.

Its function is as follows. The function of tropomyosin in smooth muscle and non-muscle cells is not clear. This chain is Tropomyosin, smooth muscle/fibroblast CTM1 (CTM1), found in Ciona intestinalis (Transparent sea squirt).